We begin with the raw amino-acid sequence, 201 residues long: LexA repressor 1 (201 aa).

Positions 28 to 48 (LREIAAHLKISGTLGVSKHLE) form a DNA-binding region, H-T-H motif. Residues Ser-120 and Lys-157 each act as for autocatalytic cleavage activity in the active site.

Belongs to the peptidase S24 family. In terms of assembly, homodimer.

It catalyses the reaction Hydrolysis of Ala-|-Gly bond in repressor LexA.. Functionally, represses a number of genes involved in the response to DNA damage (SOS response), including recA and lexA. In the presence of single-stranded DNA, RecA interacts with LexA causing an autocatalytic cleavage which disrupts the DNA-binding part of LexA, leading to derepression of the SOS regulon and eventually DNA repair. This chain is LexA repressor 1, found in Geobacter sulfurreducens (strain ATCC 51573 / DSM 12127 / PCA).